The chain runs to 311 residues: Replicative helicase loader DnaI (311 aa).

The interval 1–136 is N-terminal domain (Nd); it reads MEPIGRSLQG…LGATFQQVDI (136 aa). Residues cysteine 67, cysteine 70, histidine 84, and cysteine 101 each contribute to the Zn(2+) site. Positions 137–311 are C-terminal domain (Cd); sequence SDPSRLAMFQ…RLDGENRRHP (175 aa). An ATP-binding site is contributed by 168–175; that stretch reads GKFGVGKT.

This sequence belongs to the DnaI family. In terms of assembly, the DNA replisome assembles sequentially on oriC in this order; DnaA, DnaD, DnaB, DnaI-DnaC helicase. Monomer with a very minor amount of dimer in solution. Interacts with replicative helicase (from G.stearothermophilus, called DnaB); this interaction is disrupted by DnaD. Interacts with replicative helicase DnaC, forms a DnaC(6):DnaI(6) complex. Interacts with the helicase as 3 dimers. A stable complex with DnaG primase, DnaI(6):helicase(6):DnaG(3) fragment can be isolated; DnaI and DnaG do not contact each other (helicase and DnaG in this complex are derived from G.stearothermophilus). It depends on Zn(2+) as a cofactor.

Its subcellular location is the cytoplasm. The enzyme catalyses ATP + H2O = ADP + phosphate + H(+). In terms of biological role, helps load the DnaC replicative helicase onto single-stranded (ss)DNA and simulates the helicase activity; in the presence of DnaB more helicase activity is seen. Regulates DnaC helicase activity, at low concentrations stimulates the DNA helicase and ATPase activities of DnaC. Has no measurable ATPase activity after 1 hour incubation of 6 uM DnaI with or without DNA. Another group has found the protein has weak ATPase activity that is not stimulated by ssDNA. Whole protein binds forked DNA (but not ssDNA) weakly; ATP and ADPNP (probably 5'-adenylyl beta, gamma-imidodiphosphate) have no effect on DNA binding. DnaB, DnaD and DnaI may be required for a PriA-independent pathway of replication fork restart. The chain is Replicative helicase loader DnaI from Bacillus subtilis (strain 168).